The chain runs to 140 residues: Gonadotropin subunit beta-2 (140 aa).

The first 23 residues, 1–23 (MGTPVKILVVLFSVIVLLAVAQS), serve as a signal peptide directing secretion. 6 cysteine pairs are disulfide-bonded: Cys-29-Cys-77, Cys-43-Cys-92, Cys-46-Cys-130, Cys-54-Cys-108, Cys-58-Cys-110, and Cys-113-Cys-120. N-linked (GlcNAc...) asparagine glycosylation is present at Asn-33.

It belongs to the glycoprotein hormones subunit beta family. As to quaternary structure, heterodimer of an alpha and a beta chain.

It localises to the secreted. Functionally, involved in gametogenesis and steroidogenesis. The chain is Gonadotropin subunit beta-2 (cgbb) from Carassius auratus (Goldfish).